We begin with the raw amino-acid sequence, 105 residues long: Large ribosomal subunit protein uL24 (105 aa).

Belongs to the universal ribosomal protein uL24 family. In terms of assembly, part of the 50S ribosomal subunit.

One of two assembly initiator proteins, it binds directly to the 5'-end of the 23S rRNA, where it nucleates assembly of the 50S subunit. Functionally, one of the proteins that surrounds the polypeptide exit tunnel on the outside of the subunit. The polypeptide is Large ribosomal subunit protein uL24 (Wolbachia pipientis wMel).